The sequence spans 349 residues: Pseudouridylate synthase TRUB1 (349 aa).

Alanine 2 bears the N-acetylalanine mark. Serine 11 carries the phosphoserine modification. Catalysis depends on aspartate 121, which acts as the Nucleophile.

This sequence belongs to the pseudouridine synthase TruB family. In terms of tissue distribution, highly expressed in heart, skeletal muscle and liver. Expressed at lower levels in lung, small intestine, kidney and spleen.

The protein localises to the nucleus. Its subcellular location is the cytoplasm. The protein resides in the cytosol. It catalyses the reaction a uridine in mRNA = a pseudouridine in mRNA. It carries out the reaction a uridine in tRNA = a pseudouridine in tRNA. The enzyme catalyses uridine(55) in tRNA = pseudouridine(55) in tRNA. Functionally, pseudouridine synthase that catalyzes pseudouridylation of mRNAs and tRNAs. Mediates pseudouridylation of mRNAs with the consensus sequence 5'-GUUCNANNC-3', harboring a stem-loop structure. Constitutes the major pseudouridine synthase acting on mRNAs. Also catalyzes pseudouridylation of some tRNAs, including synthesis of pseudouridine(55) from uracil-55, in the psi GC loop of a subset of tRNAs. Promotes the processing of pri-let-7 microRNAs (pri-miRNAs) independently of its RNA pseudouridylate synthase activity. Acts by binding to the stem-loop structure on pri-let-7, preventing LIN28-binding (LIN28A and/or LIN28B), thereby enhancing the interaction between pri-let-7 and the microprocessor DGCR8, which mediates miRNA maturation. This is Pseudouridylate synthase TRUB1 from Homo sapiens (Human).